We begin with the raw amino-acid sequence, 305 residues long: Taste receptor type 2 member 13 (305 aa).

Residues Met-1–Gly-7 lie on the Extracellular side of the membrane. The helical transmembrane segment at Ile-8–Val-28 threads the bilayer. At Leu-29–Ser-43 the chain is on the cytoplasmic side. A helical membrane pass occupies residues Ile-44–Ile-64. Residues Thr-65–Thr-88 are Extracellular-facing. A helical membrane pass occupies residues Trp-89–Leu-109. The Cytoplasmic portion of the chain corresponds to Lys-110–Lys-128. A helical membrane pass occupies residues Val-129–Asn-149. Topologically, residues Lys-150 to Glu-182 are extracellular. A glycan (N-linked (GlcNAc...) asparagine) is linked at Asn-162. The helical transmembrane segment at Met-183–Phe-203 threads the bilayer. Over Ser-204 to Arg-232 the chain is Cytoplasmic. A helical membrane pass occupies residues Ile-233–Ile-253. Residues Pro-254–Gly-262 are Extracellular-facing. Residues Leu-263–Leu-283 form a helical membrane-spanning segment. The Cytoplasmic segment spans residues Gly-284–His-305.

It belongs to the G-protein coupled receptor T2R family.

The protein localises to the cell membrane. In terms of biological role, receptor that may play a role in the perception of bitterness and is gustducin-linked. May play a role in sensing the chemical composition of the gastrointestinal content. The activity of this receptor may stimulate alpha gustducin, mediate PLC-beta-2 activation and lead to the gating of TRPM5. This is Taste receptor type 2 member 13 from Mus musculus (Mouse).